A 205-amino-acid polypeptide reads, in one-letter code: Urease accessory protein UreG (205 aa).

12 to 19 (GPVGSGKT) lines the GTP pocket.

Belongs to the SIMIBI class G3E GTPase family. UreG subfamily. Homodimer. UreD, UreF and UreG form a complex that acts as a GTP-hydrolysis-dependent molecular chaperone, activating the urease apoprotein by helping to assemble the nickel containing metallocenter of UreC. The UreE protein probably delivers the nickel.

The protein localises to the cytoplasm. Functionally, facilitates the functional incorporation of the urease nickel metallocenter. This process requires GTP hydrolysis, probably effectuated by UreG. The polypeptide is Urease accessory protein UreG (Pseudomonas savastanoi pv. phaseolicola (strain 1448A / Race 6) (Pseudomonas syringae pv. phaseolicola (strain 1448A / Race 6))).